A 317-amino-acid polypeptide reads, in one-letter code: Gluconeogenesis factor (317 aa).

The protein belongs to the gluconeogenesis factor family.

Its subcellular location is the cytoplasm. Required for morphogenesis under gluconeogenic growth conditions. Required, in gluconeogenic growth conditions, for the correct localization of PBP1 and hence for displaying a normal rod shape. The chain is Gluconeogenesis factor (mgfK) from Bacillus subtilis (strain 168).